The primary structure comprises 500 residues: uncharacterized protein (500 aa).

Positions 1-20 (MHSIIFKAAVALLGVSTAAG) are cleaved as a signal peptide. An N-linked (GlcNAc...) asparagine glycan is attached at Asn-43. An FAD-binding PCMH-type domain is found at 60-232 (TALRPDCIIA…TAFTVKTHTQ (173 aa)). Residue His-98 is modified to Pros-8alpha-FAD histidine. Asn-194, Asn-201, Asn-246, Asn-299, and Asn-414 each carry an N-linked (GlcNAc...) asparagine glycan.

Belongs to the oxygen-dependent FAD-linked oxidoreductase family. Requires FAD as cofactor.

The protein localises to the secreted. This is an uncharacterized protein from Arthroderma benhamiae (strain ATCC MYA-4681 / CBS 112371) (Trichophyton mentagrophytes).